The following is a 165-amino-acid chain: Transmembrane protein 253 (165 aa).

The next 3 membrane-spanning stretches (helical) occupy residues 31–51, 60–80, and 91–111; these read LVLAVSQLWLAVAVVPFAVSV, MTTALPLGPGILGLLTGIVTL, and LAGLLVLELSAEAFTLGGVLV. A disordered region spans residues 145–165; sequence EEVPELETGPTVASTAKRTNQ. Residues 155 to 165 show a composition bias toward polar residues; sequence TVASTAKRTNQ.

The protein localises to the membrane. The polypeptide is Transmembrane protein 253 (TMEM253) (Bos taurus (Bovine)).